The chain runs to 399 residues: Coiled-coil domain-containing protein 85C-B (399 aa).

Coiled coils occupy residues 52–84 (NRSL…ELCC) and 113–144 (KEVS…DIIL). The tract at residues 151–199 (NGAGSRSSIDSQSSLSNLNGGSGTVRDVGDGSSTSSGGSAGSPDHHHNH) is disordered. Over residues 155–169 (SRSSIDSQSSLSNLN) the composition is skewed to low complexity.

Belongs to the CCDC85 family.

The protein resides in the cell junction. It is found in the tight junction. Its subcellular location is the adherens junction. May play a role in cell-cell adhesion and epithelium development through its interaction with proteins of the beta-catenin family. May play an important role in cortical development, especially in the maintenance of radial glia. In Danio rerio (Zebrafish), this protein is Coiled-coil domain-containing protein 85C-B (ccdc85cb).